Here is a 467-residue protein sequence, read N- to C-terminus: Probable lipase C1672.09 (467 aa).

The Cytoplasmic portion of the chain corresponds to 1–17 (MIQLPFIQRLKWEEYMA). The chain crosses the membrane as a helical; Signal-anchor for type II membrane protein span at residues 18-38 (LFLGFFFVIFEKLLSCLAFMI). Topologically, residues 39–467 (HNTLGLFYRS…NHIAPRNKPI (429 aa)) are lumenal. Phosphoserine is present on Ser66. The AB hydrolase-1 domain maps to 127-421 (PVVYCHHGLL…SYEHLDMIWA (295 aa)). Residue Ser222 is the Nucleophile of the active site. Residues Asn311 and Asn316 are each glycosylated (N-linked (GlcNAc...) asparagine). Residues Asp389 and His415 each act as charge relay system in the active site. A compositionally biased stretch (basic and acidic residues) spans 440 to 457 (HHPPEHEENDKENREIQK). Residues 440 to 467 (HHPPEHEENDKENREIQKNHIAPRNKPI) form a disordered region.

This sequence belongs to the AB hydrolase superfamily. Lipase family.

It is found in the cytoplasm. Its subcellular location is the membrane. Probable lipase. The sequence is that of Probable lipase C1672.09 from Schizosaccharomyces pombe (strain 972 / ATCC 24843) (Fission yeast).